We begin with the raw amino-acid sequence, 247 residues long: Cell division protein ZapD (247 aa).

This sequence belongs to the ZapD family. Interacts with FtsZ.

It localises to the cytoplasm. Its function is as follows. Cell division factor that enhances FtsZ-ring assembly. Directly interacts with FtsZ and promotes bundling of FtsZ protofilaments, with a reduction in FtsZ GTPase activity. The chain is Cell division protein ZapD from Enterobacter sp. (strain 638).